Consider the following 624-residue polypeptide: Ceramide transfer protein (624 aa).

Polar residues predominate over residues methionine 1–glycine 11. A disordered region spans residues methionine 1 to valine 24. Residues proline 23–threonine 117 form the PH domain. Serine 126 is subject to Phosphoserine. A Phosphoserine; by PKD modification is found at serine 132. Residue serine 135 is modified to Phosphoserine. Residues isoleucine 263 to histidine 303 adopt a coiled-coil conformation. A Phosphoserine modification is found at serine 315. Positions glutamate 321–glutamate 327 match the FFAT motif. Phosphotyrosine is present on tyrosine 372. Phosphoserine is present on residues serine 373, serine 377, and serine 380. One can recognise an START domain in the interval aspartate 389–alanine 618. 4 residues coordinate an N-acylsphing-4-enine: glutamate 472, glutamine 493, asparagine 530, and tyrosine 579.

Interacts with VAPA and VAPB. Interaction with VAPB is less efficient than with VAPA. Interacts (via FFAT motif) with MOSPD2 (via MSP domain). Phosphorylation on Ser-132 decreases the affinity toward phosphatidylinositol 4-phosphate at Golgi membranes and reduces ceramide transfer activity. Inactivated by hyperphosphorylation of serine residues by CSNK1G2/CK1 that triggers dissociation from the Golgi complex, thus down-regulating ER-to-Golgi transport of ceramide and sphingomyelin synthesis. In terms of tissue distribution, widely expressed.

It is found in the cytoplasm. The protein resides in the golgi apparatus. Its subcellular location is the endoplasmic reticulum. The catalysed reaction is N-hexadecanoylsphing-4-enine(in) = N-hexadecanoylsphing-4-enine(out). Functionally, shelters ceramides and diacylglycerol lipids inside its START domain and mediates the intracellular trafficking of ceramides and diacylglycerol lipids in a non-vesicular manner. This is Ceramide transfer protein from Homo sapiens (Human).